Consider the following 348-residue polypeptide: Mannonate dehydratase (348 aa).

Belongs to the mannonate dehydratase family. The cofactor is Fe(2+). Mn(2+) is required as a cofactor.

It catalyses the reaction D-mannonate = 2-dehydro-3-deoxy-D-gluconate + H2O. The protein operates within carbohydrate metabolism; pentose and glucuronate interconversion. In terms of biological role, catalyzes the dehydration of D-mannonate. In Staphylococcus haemolyticus (strain JCSC1435), this protein is Mannonate dehydratase.